An 855-amino-acid chain; its full sequence is Zinc finger protein 814 (855 aa).

In terms of domain architecture, KRAB spans 15 to 91 (VTFEDVAVNF…PMAGVSPKKA (77 aa)). The C2H2-type 1; degenerate zinc-finger motif lies at 120–142 (HRCEAWGNKLYDSGNFHQHQNEH). C2H2-type zinc fingers lie at residues 242-264 (YVCC…QRVH), 269-291 (HECG…QRVH), 296-318 (HECG…QRVH), 324-346 (YECG…QRVH), 352-374 (YECG…QRVH), 380-402 (YECG…QRVH), 408-430 (YECG…QRFH), 436-458 (YGCE…QRVH), 464-486 (FKCG…QRVH), 492-514 (YQCG…QRVH), 520-542 (YECG…QQIH), 548-570 (YECG…QRVH), 576-598 (YGCG…QRVH), 604-626 (YECG…QRMH), 632-654 (YKCG…QRVH), 660-682 (FKCG…QHGH), 688-710 (YVCR…QRIH), 716-738 (YACE…QRVH), 744-766 (YECN…KRIH), 772-794 (YECS…KRVH), 800-822 (YECS…KRVH), and 828-850 (YKCE…QSSH). Lysine 335 is covalently cross-linked (Glycyl lysine isopeptide (Lys-Gly) (interchain with G-Cter in SUMO2)). A Glycyl lysine isopeptide (Lys-Gly) (interchain with G-Cter in SUMO2) cross-link involves residue lysine 391.

This Homo sapiens (Human) protein is Zinc finger protein 814 (ZNF814).